A 260-amino-acid chain; its full sequence is Potassium inward rectifier (Kir)-like channel 3 (260 aa).

A disordered region spans residues 1 to 34 (MPMTPSEFKNRLLFGSLPRSSSDPTDLQFTEPNV). At 1-68 (MPMTPSEFKN…EQSVSKSIAR (68 aa)) the chain is on the cytoplasmic side. Residues 18–31 (PRSSSDPTDLQFTE) are compositionally biased toward polar residues. A helical transmembrane segment spans residues 69-89 (QALALLVVYLSLGVLIYWLTL). Residues 127 to 146 (DSFCFSVMMVTTVGFGDRAF) constitute an intramembrane region (pore-forming). The helical transmembrane segment at 153-173 (FLAAVWLLVSTLAVARAFLFL) threads the bilayer. Residues 174-260 (ADARADKRNR…LVDLTTATSV (87 aa)) are Cytoplasmic-facing. EF-hand domains lie at 190-225 (LGESISISQFFAADIDNDGRLSLAEFAIYKLKQMEK) and 229-256 (EDFIQICNQFDKLDRTQSGRITLVDLTT). Residues aspartate 203, aspartate 205, aspartate 207, arginine 209, glutamate 214, aspartate 242, serine 246, arginine 248, and aspartate 253 each coordinate Ca(2+).

Belongs to the two pore domain potassium channel (TC 1.A.1.7) family. In terms of assembly, homotetramer. As to expression, expressed in hydathodes and the vascular tissues of roots, stems, leaves and flowers.

The protein resides in the vacuole membrane. Functionally, probable calcium-activated potassium channel. This chain is Potassium inward rectifier (Kir)-like channel 3 (KCO3), found in Arabidopsis thaliana (Mouse-ear cress).